Here is a 1070-residue protein sequence, read N- to C-terminus: DNA-directed RNA polymerase subunit beta (1070 aa).

The protein belongs to the RNA polymerase beta chain family. In terms of assembly, in plastids the minimal PEP RNA polymerase catalytic core is composed of four subunits: alpha, beta, beta', and beta''. When a (nuclear-encoded) sigma factor is associated with the core the holoenzyme is formed, which can initiate transcription.

Its subcellular location is the plastid. The protein resides in the chloroplast. It carries out the reaction RNA(n) + a ribonucleoside 5'-triphosphate = RNA(n+1) + diphosphate. In terms of biological role, DNA-dependent RNA polymerase catalyzes the transcription of DNA into RNA using the four ribonucleoside triphosphates as substrates. This chain is DNA-directed RNA polymerase subunit beta, found in Morus indica (Mulberry).